Here is a 344-residue protein sequence, read N- to C-terminus: Polycomb group RING finger protein 2 (344 aa).

Residues 18-57 (CALCGGYFIDATTIVECLHSFCKTCIVRYLETNKYCPMCD) form an RING-type zinc finger. Glycyl lysine isopeptide (Lys-Gly) (interchain with G-Cter in SUMO2) cross-links involve residues K51 and K88. The Nuclear localization signal motif lies at 81 to 95 (KLVPGLFKDEMKRRR). A compositionally biased stretch (polar residues) spans 240–253 (TVPTPSEGTNTSGA). The disordered stretch occupies residues 240–344 (TVPTPSEGTN…VNGAPVPPLT (105 aa)). A compositionally biased stretch (low complexity) spans 263–313 (APSPATLPATSSSLPSPATPSHGSPSSHGPPATHPTSPTPPSTASGATTAA). Residues 314-328 (NGGSLNCLQTPSSTS) show a composition bias toward polar residues. Position 344 is a phosphothreonine (T344).

In terms of assembly, exists as both a monomer and homodimer. Component of a PRC1-like complex. Interacts with CBX8, RING1 and RNF2. Interacts with CBX7. Interacts with PHC2. In terms of processing, phosphorylated. Homodimer formation is regulated by phosphorylation with only unphosphorylated proteins forming homodimers. In terms of tissue distribution, detected in all tissues examined with high expression found in placenta lung and kidney and low expression, in liver, pancreas and skeletal muscle.

Its subcellular location is the nucleus. Transcriptional repressor. Binds specifically to the DNA sequence 5'-GACTNGACT-3'. Has tumor suppressor activity. May play a role in control of cell proliferation and/or neural cell development. Regulates proliferation of early T progenitor cells by maintaining expression of HES1. Also plays a role in antero-posterior specification of the axial skeleton and negative regulation of the self-renewal activity of hematopoietic stem cells. Component of a Polycomb group (PcG) multiprotein PRC1-like complex, a complex class required to maintain the transcriptionally repressive state of many genes, including Hox genes, throughout development. PcG PRC1 complex acts via chromatin remodeling and modification of histones; it mediates monoubiquitination of histone H2A 'Lys-119', rendering chromatin heritably changed in its expressibility. Within the PRC1-like complex, regulates RNF2 ubiquitin ligase activity. The sequence is that of Polycomb group RING finger protein 2 (PCGF2) from Homo sapiens (Human).